Consider the following 102-residue polypeptide: MQKARIKLSSTQHTELDGVCDQIKAIAEKTGVDMAGPIPLPTKALKVTTRKSTDGEGSSSFDRWTMRVHKRVIDIEADERTMKHIMKVRIPDTVQIEIELRN.

Belongs to the universal ribosomal protein uS10 family. In terms of assembly, part of the 30S ribosomal subunit.

Involved in the binding of tRNA to the ribosomes. This chain is Small ribosomal subunit protein uS10, found in Methanococcus maripaludis (strain C7 / ATCC BAA-1331).